We begin with the raw amino-acid sequence, 533 residues long: Thromboxane-A synthase (533 aa).

The Cytoplasmic segment spans residues 1-10 (MEALGFLKLE). Residues 11–31 (VNGPMVTVALSVALLALLKWY) traverse the membrane as a helical segment. Over 32–75 (STSAFSRLEKLGLRHPKPSPFIGNLMFFRQGFWESQMELRKLYG) the chain is Lumenal. The chain crosses the membrane as a helical span at residues 76–96 (PLCGYYLGRRMFIVISEPDMI). Topologically, residues 97–223 (KQVLVENFSN…KRFFEFCIPR (127 aa)) are cytoplasmic. Residues 224–244 (PILVLLLSFPSIMVPLARILP) form a helical membrane-spanning segment. The Lumenal segment spans residues 245–335 (NKNRDELNGF…LTVDEIVGQA (91 aa)). The helical transmembrane segment at 336 to 356 (FIFLIAGYEIVTNTLSFATYL) threads the bilayer. The Cytoplasmic portion of the chain corresponds to 357 to 533 (LATNPDCQEK…NGVYIKIVSR (177 aa)). Cys-479 contributes to the heme binding site.

Belongs to the cytochrome P450 family. In terms of assembly, monomer. Requires heme as cofactor.

Its subcellular location is the endoplasmic reticulum membrane. The enzyme catalyses prostaglandin H2 = thromboxane A2. It carries out the reaction prostaglandin H2 = (12S)-hydroxy-(5Z,8E,10E)-heptadecatrienoate + malonaldehyde. It catalyses the reaction a hydroperoxyeicosatetraenoate = an oxoeicosatetraenoate + H2O. The catalysed reaction is (15S)-hydroperoxy-(5Z,8Z,11Z,13E)-eicosatetraenoate = 15-oxo-(5Z,8Z,11Z,13E)-eicosatetraenoate + H2O. The enzyme catalyses (15S)-hydroperoxy-(5Z,8Z,11Z,13E)-eicosatetraenoate + AH2 = (15S)-hydroxy-(5Z,8Z,11Z,13E)-eicosatetraenoate + A + H2O. In terms of biological role, catalyzes the conversion of prostaglandin H2 (PGH2) to thromboxane A2 (TXA2), a potent inducer of blood vessel constriction and platelet aggregation. Also cleaves PGH2 to 12-hydroxy-heptadecatrienoicacid (12-HHT) and malondialdehyde, which is known to act as a mediator of DNA damage. 12-HHT and malondialdehyde are formed stoichiometrically in the same amounts as TXA2. Additionally, displays dehydratase activity, toward (15S)-hydroperoxy-(5Z,8Z,11Z,13E)-eicosatetraenoate (15(S)-HPETE) producing 15-KETE and 15-HETE. In Macaca fascicularis (Crab-eating macaque), this protein is Thromboxane-A synthase (TBXAS1).